We begin with the raw amino-acid sequence, 962 residues long: Glycine dehydrogenase (decarboxylating) (962 aa).

K709 bears the N6-(pyridoxal phosphate)lysine mark.

This sequence belongs to the GcvP family. As to quaternary structure, the glycine cleavage system is composed of four proteins: P, T, L and H. Pyridoxal 5'-phosphate serves as cofactor.

The enzyme catalyses N(6)-[(R)-lipoyl]-L-lysyl-[glycine-cleavage complex H protein] + glycine + H(+) = N(6)-[(R)-S(8)-aminomethyldihydrolipoyl]-L-lysyl-[glycine-cleavage complex H protein] + CO2. Its function is as follows. The glycine cleavage system catalyzes the degradation of glycine. The P protein binds the alpha-amino group of glycine through its pyridoxal phosphate cofactor; CO(2) is released and the remaining methylamine moiety is then transferred to the lipoamide cofactor of the H protein. This chain is Glycine dehydrogenase (decarboxylating), found in Shewanella sp. (strain ANA-3).